We begin with the raw amino-acid sequence, 139 residues long: D-ribose pyranase (139 aa).

Residue H20 is the Proton donor of the active site. Substrate-binding positions include D28, H106, and 128 to 130 (YAN).

The protein belongs to the RbsD / FucU family. RbsD subfamily. Homodecamer.

Its subcellular location is the cytoplasm. It carries out the reaction beta-D-ribopyranose = beta-D-ribofuranose. The protein operates within carbohydrate metabolism; D-ribose degradation; D-ribose 5-phosphate from beta-D-ribopyranose: step 1/2. Catalyzes the interconversion of beta-pyran and beta-furan forms of D-ribose. The protein is D-ribose pyranase of Shewanella pealeana (strain ATCC 700345 / ANG-SQ1).